We begin with the raw amino-acid sequence, 261 residues long: Homeobox protein engrailed-2b (261 aa).

3 stretches are compositionally biased toward basic and acidic residues: residues 1–21 (MEENDHSNRDVERQDSGDESN), 53–72 (GRRKEGSRRDEINIVERENR), and 100–116 (KKTDISTDESLKSRAET). Disordered regions lie at residues 1 to 24 (MEENDHSNRDVERQDSGDESNRAI), 53 to 125 (GRRK…SSDS), and 152 to 176 (DRPSSGPRSRKPKKKTPTKEDKRPR). Residues 172–231 (DKRPRTAFTAEQLQRLKNEFQNNRYLTEQRRQALAQELGLNESQIKIWFQNKRAKIKKAT) constitute a DNA-binding region (homeobox).

The protein belongs to the engrailed homeobox family.

It localises to the nucleus. This chain is Homeobox protein engrailed-2b (eng2b), found in Danio rerio (Zebrafish).